The sequence spans 743 residues: Cytosolic neutral trehalase (743 aa).

Ca(2+) is bound by residues Asp-95, Asp-97, Asn-99, Gln-101, and Asp-106. Substrate-binding positions include Arg-285, 292–293, Asn-329, 338–340, Glu-405, Arg-454, and Gly-457; these read WD and RSQ. Residues Asp-459 and Glu-664 each act as proton donor/acceptor in the active site.

Belongs to the glycosyl hydrolase 37 family. Requires Ca(2+) as cofactor.

It localises to the cytoplasm. It carries out the reaction alpha,alpha-trehalose + H2O = alpha-D-glucose + beta-D-glucose. It functions in the pathway carbohydrate degradation. Functionally, hydrolyzes intracellular trehalose to glucose. The sequence is that of Cytosolic neutral trehalase from Beauveria bassiana (strain ARSEF 2860) (White muscardine disease fungus).